The chain runs to 161 residues: Allophycocyanin beta chain (161 aa).

N71 carries the N4-methylasparagine modification. C81 lines the (2R,3E)-phycocyanobilin pocket.

This sequence belongs to the phycobiliprotein family. Heterodimer of an alpha and a beta chain. Contains one covalently linked phycocyanobilin chromophore.

The protein resides in the cellular thylakoid membrane. Its function is as follows. Light-harvesting photosynthetic bile pigment-protein from the phycobiliprotein complex. Allophycocyanin has a maximum absorption at approximately 650 nanometers. In Thermosynechococcus vestitus (strain NIES-2133 / IAM M-273 / BP-1), this protein is Allophycocyanin beta chain (apcB).